The chain runs to 910 residues: Chitin synthase A (910 aa).

Positions 56-156 (NYHDDYDPRP…EPAPTPTPAP (101 aa)) are disordered. Composition is skewed to basic and acidic residues over residues 57–84 (YHDD…HHDA) and 130–148 (DPHD…HDEP). A run of 9 helical transmembrane segments spans residues 366 to 386 (WFFQ…IDAG), 448 to 468 (SAFG…YVAL), 583 to 603 (VYQT…FLVF), 620 to 640 (VLFI…FILS), 655 to 675 (MVYF…FITV), 701 to 721 (TLII…IIFL), 730 to 750 (FIQY…YAFC), 828 to 848 (GVVL…LQAG), and 876 to 896 (LYSV…FLVV).

Belongs to the chitin synthase family. Class I subfamily.

The protein localises to the cell membrane. It carries out the reaction [(1-&gt;4)-N-acetyl-beta-D-glucosaminyl](n) + UDP-N-acetyl-alpha-D-glucosamine = [(1-&gt;4)-N-acetyl-beta-D-glucosaminyl](n+1) + UDP + H(+). Polymerizes chitin, a structural polymer of the cell wall and septum, by transferring the sugar moiety of UDP-GlcNAc to the non-reducing end of the growing chitin polymer. In Ampelomyces quisqualis (Powdery mildew agent), this protein is Chitin synthase A (CHSA).